Consider the following 601-residue polypeptide: Elongation factor 4 (601 aa).

The tr-type G domain maps to 5-187 (EHIRNFSIIA…AIVERLPAPE (183 aa)). Residues 17-22 (DHGKST) and 134-137 (NKVD) contribute to the GTP site.

Belongs to the TRAFAC class translation factor GTPase superfamily. Classic translation factor GTPase family. LepA subfamily.

It localises to the cell inner membrane. The enzyme catalyses GTP + H2O = GDP + phosphate + H(+). Required for accurate and efficient protein synthesis under certain stress conditions. May act as a fidelity factor of the translation reaction, by catalyzing a one-codon backward translocation of tRNAs on improperly translocated ribosomes. Back-translocation proceeds from a post-translocation (POST) complex to a pre-translocation (PRE) complex, thus giving elongation factor G a second chance to translocate the tRNAs correctly. Binds to ribosomes in a GTP-dependent manner. This Nitratidesulfovibrio vulgaris (strain DSM 19637 / Miyazaki F) (Desulfovibrio vulgaris) protein is Elongation factor 4.